The chain runs to 394 residues: Anhydro-N-acetylmuramic acid kinase (394 aa).

Residue glycine 11 to aspartate 18 coordinates ATP.

It belongs to the anhydro-N-acetylmuramic acid kinase family.

The catalysed reaction is 1,6-anhydro-N-acetyl-beta-muramate + ATP + H2O = N-acetyl-D-muramate 6-phosphate + ADP + H(+). Its pathway is amino-sugar metabolism; 1,6-anhydro-N-acetylmuramate degradation. It participates in cell wall biogenesis; peptidoglycan recycling. Functionally, catalyzes the specific phosphorylation of 1,6-anhydro-N-acetylmuramic acid (anhMurNAc) with the simultaneous cleavage of the 1,6-anhydro ring, generating MurNAc-6-P. Is required for the utilization of anhMurNAc either imported from the medium or derived from its own cell wall murein, and thus plays a role in cell wall recycling. The chain is Anhydro-N-acetylmuramic acid kinase from Deinococcus geothermalis (strain DSM 11300 / CIP 105573 / AG-3a).